Here is a 382-residue protein sequence, read N- to C-terminus: Mannitol-1-phosphate 5-dehydrogenase (382 aa).

Position 3–14 (3–14 (ALHFGAGNIGRG)) interacts with NAD(+).

It belongs to the mannitol dehydrogenase family.

The catalysed reaction is D-mannitol 1-phosphate + NAD(+) = beta-D-fructose 6-phosphate + NADH + H(+). The chain is Mannitol-1-phosphate 5-dehydrogenase (mtlD) from Klebsiella pneumoniae.